A 176-amino-acid chain; its full sequence is Cathelicidin-2 (176 aa).

The signal sequence occupies residues 1 to 29 (METQGASLSLGRWSLWLLLLGLVVPLASA). Glutamine 30 carries the pyrrolidone carboxylic acid modification. A propeptide spanning residues 30 to 130 (QALSYREAVL…DINCNELQSV (101 aa)) is cleaved from the precursor. 2 cysteine pairs are disulfide-bonded: cysteine 85-cysteine 96 and cysteine 107-cysteine 124. The disordered stretch occupies residues 135–176 (PIRRPPIRPPFNPPFRPPVRPPFRPPFRPPFRPPIGPFPGRR). Residues 141 to 176 (IRPPFNPPFRPPVRPPFRPPFRPPFRPPIGPFPGRR) are compositionally biased toward pro residues. A Proline amide modification is found at proline 173. A propeptide spans 174–176 (GRR) (removed in mature form).

Belongs to the cathelicidin family. In terms of processing, elastase is responsible for its maturation.

Its subcellular location is the secreted. Binds to the lipid A moiety of bacterial lipopolysaccharides (LPS), a glycolipid present in the outer membrane of all Gram-negative bacteria. Shows a potent antimicrobial activity against the Gram-negative bacteria E.coli, S.typhimurium and P.aeruginosa. Less active against the Gram-positive bacteria S.aureus, L.monocytogenes and B.subtilis. The chain is Cathelicidin-2 (CATHL2) from Capra hircus (Goat).